A 172-amino-acid polypeptide reads, in one-letter code: Large ribosomal subunit protein eL20A (172 aa).

Ser-32 is subject to Phosphoserine. Glycyl lysine isopeptide (Lys-Gly) (interchain with G-Cter in ubiquitin) cross-links involve residues Lys-125, Lys-131, and Lys-149.

The protein belongs to the eukaryotic ribosomal protein eL20 family. In terms of assembly, component of the large ribosomal subunit (LSU). Mature yeast ribosomes consist of a small (40S) and a large (60S) subunit. The 40S small subunit contains 1 molecule of ribosomal RNA (18S rRNA) and 33 different proteins (encoded by 57 genes). The large 60S subunit contains 3 rRNA molecules (25S, 5.8S and 5S rRNA) and 46 different proteins (encoded by 81 genes). eL20 forms multiple interactions with RNA and proteins in the central protuberance, connecting components of core functional centers that are located far apart.

The protein localises to the cytoplasm. Functionally, component of the ribosome, a large ribonucleoprotein complex responsible for the synthesis of proteins in the cell. The small ribosomal subunit (SSU) binds messenger RNAs (mRNAs) and translates the encoded message by selecting cognate aminoacyl-transfer RNA (tRNA) molecules. The large subunit (LSU) contains the ribosomal catalytic site termed the peptidyl transferase center (PTC), which catalyzes the formation of peptide bonds, thereby polymerizing the amino acids delivered by tRNAs into a polypeptide chain. The nascent polypeptides leave the ribosome through a tunnel in the LSU and interact with protein factors that function in enzymatic processing, targeting, and the membrane insertion of nascent chains at the exit of the ribosomal tunnel. This is Large ribosomal subunit protein eL20A from Saccharomyces cerevisiae (strain ATCC 204508 / S288c) (Baker's yeast).